The sequence spans 340 residues: ATPase GET3 (340 aa).

ATP is bound at residue 35-42; it reads KGGVGKTT. D64 is an active-site residue. Residues E245 and N272 each coordinate ATP. The Zn(2+) site is built by C283 and C286.

This sequence belongs to the arsA ATPase family. As to quaternary structure, homodimer.

It is found in the cytoplasm. It localises to the endoplasmic reticulum. Functionally, ATPase required for the post-translational delivery of tail-anchored (TA) proteins to the endoplasmic reticulum. Recognizes and selectively binds the transmembrane domain of TA proteins in the cytosol. This complex then targets to the endoplasmic reticulum by membrane-bound receptors, where the tail-anchored protein is released for insertion. This process is regulated by ATP binding and hydrolysis. ATP binding drives the homodimer towards the closed dimer state, facilitating recognition of newly synthesized TA membrane proteins. ATP hydrolysis is required for insertion. Subsequently, the homodimer reverts towards the open dimer state, lowering its affinity for the membrane-bound receptor, and returning it to the cytosol to initiate a new round of targeting. The chain is ATPase GET3 from Chaetomium globosum (strain ATCC 6205 / CBS 148.51 / DSM 1962 / NBRC 6347 / NRRL 1970) (Soil fungus).